The following is a 275-amino-acid chain: Adenylate kinase (275 aa).

54–59 (GAGKGT) provides a ligand contact to ATP. The segment at 74–103 (ATGDMLRSQVAKKTPLGREAKKIMDQGGLV) is NMP. AMP-binding positions include Thr75, Arg80, 101-103 (GLV), 130-133 (GFPR), and Gln137. Residues 171–208 (GRLVHPASGRSYHRVFNPPKADMKDDITGEPLVSRSDD) are LID. ATP contacts are provided by residues Arg172 and 181 to 182 (SY). 2 residues coordinate AMP: Arg205 and Arg216. Position 244 (Gln244) interacts with ATP.

This sequence belongs to the adenylate kinase family. AK2 subfamily. In terms of assembly, monomer.

The protein localises to the cytoplasm. It is found in the cytosol. It localises to the mitochondrion intermembrane space. The catalysed reaction is AMP + ATP = 2 ADP. Its function is as follows. Catalyzes the reversible transfer of the terminal phosphate group between ATP and AMP. Plays an important role in cellular energy homeostasis and in adenine nucleotide metabolism. Adenylate kinase activity is critical for regulation of the phosphate utilization and the AMP de novo biosynthesis pathways. The protein is Adenylate kinase (adk1) of Botryotinia fuckeliana (strain B05.10) (Noble rot fungus).